Here is a 171-residue protein sequence, read N- to C-terminus: Large ribosomal subunit protein uL10 (171 aa).

Belongs to the universal ribosomal protein uL10 family. As to quaternary structure, part of the ribosomal stalk of the 50S ribosomal subunit. The N-terminus interacts with L11 and the large rRNA to form the base of the stalk. The C-terminus forms an elongated spine to which L12 dimers bind in a sequential fashion forming a multimeric L10(L12)X complex.

Its function is as follows. Forms part of the ribosomal stalk, playing a central role in the interaction of the ribosome with GTP-bound translation factors. The polypeptide is Large ribosomal subunit protein uL10 (Erythrobacter litoralis (strain HTCC2594)).